Reading from the N-terminus, the 246-residue chain is Dihydromethanopterin reductase (acceptor) (246 aa).

4Fe-4S ferredoxin-type domains follow at residues 150–178 and 179–208; these read LPYA…VKRD and NFVE…EGKE. C159, C162, C165, C169, C188, C191, C194, and C198 together coordinate [4Fe-4S] cluster.

In terms of assembly, homodimer. [4Fe-4S] cluster is required as a cofactor.

The catalysed reaction is 5,6,7,8-tetrahydromethanopterin + A = 7,8-dihydromethanopterin + AH2. It participates in cofactor biosynthesis; 5,6,7,8-tetrahydromethanopterin biosynthesis. Involved in the biosynthesis of tetrahydromethanopterin, a coenzyme used in methanogenesis. Catalyzes the reduction of dihydromethanopterin (H(2)MPT) to tetrahydromethanopterin (H(4)MPT). Ferredoxin may serve as an electron donor. The sequence is that of Dihydromethanopterin reductase (acceptor) from Methanocaldococcus jannaschii (strain ATCC 43067 / DSM 2661 / JAL-1 / JCM 10045 / NBRC 100440) (Methanococcus jannaschii).